A 510-amino-acid chain; its full sequence is ATP synthase subunit alpha (510 aa).

169–176 (GDRQTGKT) contacts ATP.

It belongs to the ATPase alpha/beta chains family. F-type ATPases have 2 components, CF(1) - the catalytic core - and CF(0) - the membrane proton channel. CF(1) has five subunits: alpha(3), beta(3), gamma(1), delta(1), epsilon(1). CF(0) has four main subunits: a(1), b(1), b'(1) and c(9-12).

The protein localises to the cell inner membrane. The catalysed reaction is ATP + H2O + 4 H(+)(in) = ADP + phosphate + 5 H(+)(out). Functionally, produces ATP from ADP in the presence of a proton gradient across the membrane. The alpha chain is a regulatory subunit. The chain is ATP synthase subunit alpha from Rhodopseudomonas palustris (strain ATCC BAA-98 / CGA009).